The sequence spans 561 residues: Dihydroxy-acid dehydratase (561 aa).

Cys51 provides a ligand contact to [2Fe-2S] cluster. Residue Asp83 coordinates Mg(2+). Position 124 (Cys124) interacts with [2Fe-2S] cluster. Mg(2+) contacts are provided by Asp125 and Lys126. N6-carboxylysine is present on Lys126. Cys196 serves as a coordination point for [2Fe-2S] cluster. Glu448 contacts Mg(2+). Ser474 functions as the Proton acceptor in the catalytic mechanism.

It belongs to the IlvD/Edd family. In terms of assembly, homodimer. It depends on [2Fe-2S] cluster as a cofactor. Mg(2+) is required as a cofactor.

The catalysed reaction is (2R)-2,3-dihydroxy-3-methylbutanoate = 3-methyl-2-oxobutanoate + H2O. It carries out the reaction (2R,3R)-2,3-dihydroxy-3-methylpentanoate = (S)-3-methyl-2-oxopentanoate + H2O. The protein operates within amino-acid biosynthesis; L-isoleucine biosynthesis; L-isoleucine from 2-oxobutanoate: step 3/4. Its pathway is amino-acid biosynthesis; L-valine biosynthesis; L-valine from pyruvate: step 3/4. In terms of biological role, functions in the biosynthesis of branched-chain amino acids. Catalyzes the dehydration of (2R,3R)-2,3-dihydroxy-3-methylpentanoate (2,3-dihydroxy-3-methylvalerate) into 2-oxo-3-methylpentanoate (2-oxo-3-methylvalerate) and of (2R)-2,3-dihydroxy-3-methylbutanoate (2,3-dihydroxyisovalerate) into 2-oxo-3-methylbutanoate (2-oxoisovalerate), the penultimate precursor to L-isoleucine and L-valine, respectively. The polypeptide is Dihydroxy-acid dehydratase (Pyrobaculum neutrophilum (strain DSM 2338 / JCM 9278 / NBRC 100436 / V24Sta) (Thermoproteus neutrophilus)).